The chain runs to 222 residues: 26S proteasome non-ATPase regulatory subunit 9 (222 aa).

The PDZ domain occupies 108–194 (QARDMAEARE…KPLNVMVIRR (87 aa)). Serine 128 is modified (phosphoserine).

This sequence belongs to the proteasome subunit p27 family. In terms of assembly, interacts with PSMC3. Part of a transient complex (modulator) containing PSMD9, PSMC6 and PSMC3 formed during the assembly of the 26S proteasome.

Its function is as follows. Acts as a chaperone during the assembly of the 26S proteasome, specifically of the base subcomplex of the PA700/19S regulatory complex (RC). During the base subcomplex assembly is part of an intermediate PSMD9:PSMC6:PSMC3 module, also known as modulator trimer complex; PSMD9 is released during the further base assembly process. The sequence is that of 26S proteasome non-ATPase regulatory subunit 9 (Psmd9) from Rattus norvegicus (Rat).